A 271-amino-acid polypeptide reads, in one-letter code: ATP synthase subunit delta (271 aa).

Belongs to the ATPase delta chain family. As to quaternary structure, F-type ATPases have 2 components, F(1) - the catalytic core - and F(0) - the membrane proton channel. F(1) has five subunits: alpha(3), beta(3), gamma(1), delta(1), epsilon(1). F(0) has three main subunits: a(1), b(2) and c(10-14). The alpha and beta chains form an alternating ring which encloses part of the gamma chain. F(1) is attached to F(0) by a central stalk formed by the gamma and epsilon chains, while a peripheral stalk is formed by the delta and b chains.

Its subcellular location is the cell membrane. Functionally, f(1)F(0) ATP synthase produces ATP from ADP in the presence of a proton or sodium gradient. F-type ATPases consist of two structural domains, F(1) containing the extramembraneous catalytic core and F(0) containing the membrane proton channel, linked together by a central stalk and a peripheral stalk. During catalysis, ATP synthesis in the catalytic domain of F(1) is coupled via a rotary mechanism of the central stalk subunits to proton translocation. Its function is as follows. This protein is part of the stalk that links CF(0) to CF(1). It either transmits conformational changes from CF(0) to CF(1) or is implicated in proton conduction. The polypeptide is ATP synthase subunit delta (Renibacterium salmoninarum (strain ATCC 33209 / DSM 20767 / JCM 11484 / NBRC 15589 / NCIMB 2235)).